Here is a 192-residue protein sequence, read N- to C-terminus: 21.7 kDa class VI heat shock protein (192 aa).

One can recognise a sHSP domain in the interval 80–192 (SLRSLGQCRV…IPKINSKNKF (113 aa)).

Belongs to the small heat shock protein (HSP20) family. May form oligomeric structures.

Its subcellular location is the cytoplasm. The chain is 21.7 kDa class VI heat shock protein (HSP21.7) from Arabidopsis thaliana (Mouse-ear cress).